Reading from the N-terminus, the 261-residue chain is uncharacterized protein (261 aa).

The signal sequence occupies residues 1-22 (MIHSKKLTLGICLVLLIILIGG). A lipid anchor (N-palmitoyl cysteine) is attached at cysteine 23. Residue cysteine 23 is the site of S-diacylglycerol cysteine attachment.

It belongs to the staphylococcal tandem lipoprotein family.

Its subcellular location is the cell membrane. This is an uncharacterized protein from Staphylococcus aureus (strain NCTC 8325 / PS 47).